Here is a 637-residue protein sequence, read N- to C-terminus: Chaperone protein HtpG (637 aa).

The interval 1–345 is a; substrate-binding; that stretch reads MSQQETHGFQ…SNDLPLNVSR (345 aa). Residues 346-562 form a b region; it reads EILQDNQVTT…EGEMSTQMIK (217 aa). Residues 563-637 form a c region; it reads LMQAAGQAVP…MNQMLLANAK (75 aa).

It belongs to the heat shock protein 90 family. As to quaternary structure, homodimer.

The protein resides in the cytoplasm. In terms of biological role, molecular chaperone. Has ATPase activity. The polypeptide is Chaperone protein HtpG (Shewanella denitrificans (strain OS217 / ATCC BAA-1090 / DSM 15013)).